A 775-amino-acid chain; its full sequence is Endothelin-converting enzyme-like 1 (775 aa).

Over 1–61 (MEAPYSMTAH…LPRWNRREVC (61 aa)) the chain is Cytoplasmic. The tract at residues 30–52 (GTSLPPGFPRGSGRSASGSRSGL) is disordered. A compositionally biased stretch (low complexity) spans 32–52 (SLPPGFPRGSGRSASGSRSGL). Residues 62–82 (LLSGLVFAAGLCAILAAMLAL) form a helical; Signal-anchor for type II membrane protein membrane-spanning segment. Over 83-775 (KYLGPGAAGG…MNPVHKCSVW (693 aa)) the chain is Lumenal. Residues 99-775 (GCPERKAFAR…MNPVHKCSVW (677 aa)) enclose the Peptidase M13 domain. 4 cysteine pairs are disulfide-bonded: Cys-124–Cys-760, Cys-132–Cys-720, Cys-188–Cys-441, and Cys-649–Cys-772. 2 N-linked (GlcNAc...) asparagine glycosylation sites follow: Asn-255 and Asn-322. Residue His-612 coordinates Zn(2+). Residue Glu-613 is part of the active site. Residue His-616 participates in Zn(2+) binding. A glycan (N-linked (GlcNAc...) asparagine) is linked at Asn-656. Glu-672 serves as a coordination point for Zn(2+). The Proton donor role is filled by Asp-676.

Belongs to the peptidase M13 family. Zn(2+) serves as cofactor.

It is found in the membrane. In terms of biological role, may contribute to the degradation of peptide hormones and be involved in the inactivation of neuronal peptides. This is Endothelin-converting enzyme-like 1 (Ecel1) from Mus musculus (Mouse).